The chain runs to 91 residues: Probable Fe(2+)-trafficking protein (91 aa).

This sequence belongs to the Fe(2+)-trafficking protein family. As to quaternary structure, monomer.

In terms of biological role, could be a mediator in iron transactions between iron acquisition and iron-requiring processes, such as synthesis and/or repair of Fe-S clusters in biosynthetic enzymes. The polypeptide is Probable Fe(2+)-trafficking protein (Escherichia coli O6:H1 (strain CFT073 / ATCC 700928 / UPEC)).